A 135-amino-acid chain; its full sequence is 2-iminobutanoate/2-iminopropanoate deaminase (135 aa).

N-acetylserine is present on Ser2. Lys13, Lys60, Lys67, and Lys134 each carry N6-succinyllysine.

This sequence belongs to the RutC family. As to quaternary structure, homotrimer. Interacts with YTHDF2. In terms of tissue distribution, expressed predominantly in liver and kidney. Lower levels in lung and brain.

It localises to the cytoplasm. It is found in the nucleus. Its subcellular location is the peroxisome. The protein localises to the mitochondrion. It catalyses the reaction 2-iminobutanoate + H2O = 2-oxobutanoate + NH4(+). The enzyme catalyses 2-iminopropanoate + H2O = pyruvate + NH4(+). Catalyzes the hydrolytic deamination of enamine/imine intermediates that form during the course of normal metabolism. May facilitate the release of ammonia from these potentially toxic reactive metabolites, reducing their impact on cellular components. It may act on enamine/imine intermediates formed by several types of pyridoxal-5'-phosphate-dependent dehydratases including L-threonine dehydratase. Functionally, also promotes endoribonucleolytic cleavage of some transcripts by promoting recruitment of the ribonuclease P/MRP complex. Acts by bridging YTHDF2 and the ribonuclease P/MRP complex. RIDA/HRSP12 binds to N6-methyladenosine (m6A)-containing mRNAs containing a 5'-GGUUC-3' motif: cooperative binding of RIDA/HRSP12 and YTHDF2 to such transcripts lead to recruitment of the ribonuclease P/MRP complex and subsequent endoribonucleolytic cleavage. This chain is 2-iminobutanoate/2-iminopropanoate deaminase, found in Mus musculus (Mouse).